Reading from the N-terminus, the 395-residue chain is uncharacterized protein (395 aa).

The span at 286–306 (SSNKSSESTMTSPLDSASSLH) shows a compositional bias: low complexity. The disordered stretch occupies residues 286–395 (SSNKSSESTM…RNDDSGLESV (110 aa)). The segment covering 350-362 (RPPPPSVHPPIFP) has biased composition (pro residues). Residues 364–385 (QTQLFHPPTYSTQRHVTSPNSS) show a composition bias toward polar residues.

This is an uncharacterized protein from Caenorhabditis elegans.